We begin with the raw amino-acid sequence, 666 residues long: Pantothenate kinase 1 (666 aa).

The protein belongs to the type II pantothenate kinase family.

The catalysed reaction is (R)-pantothenate + ATP = (R)-4'-phosphopantothenate + ADP + H(+). The protein operates within cofactor biosynthesis; coenzyme A biosynthesis; CoA from (R)-pantothenate: step 1/5. Its activity is regulated as follows. Regulated by feedback inhibition by malonyl-CoA. In terms of biological role, catalyzes the phosphorylation of pantothenate the first step in CoA biosynthesis. May play a role in the physiological regulation of the intracellular CoA concentration. The chain is Pantothenate kinase 1 from Oryza sativa subsp. japonica (Rice).